The primary structure comprises 388 residues: Putrescine N-methyltransferase 1 (388 aa).

3 stretches are compositionally biased toward polar residues: residues 1-14 (MEVI…STIF), 23-39 (GYQN…QNGT), and 46-88 (HQNG…GNEL). Residues 1-88 (MEVISTNTNG…TISHDNGNEL (88 aa)) are disordered. The PABS domain occupies 99-336 (PGWFSEFSAL…GVIGYMLCST (238 aa)). S-adenosyl-L-methionine is bound by residues Q130, E205, and 236-237 (DG). The Proton acceptor role is filled by D255. An S-adenosyl-L-methionine-binding site is contributed by Y324.

The protein belongs to the class I-like SAM-binding methyltransferase superfamily. Spermidine/spermine synthase family. As to expression, mainly expressed in roots.

It carries out the reaction putrescine + S-adenosyl-L-methionine = N-methylputrescine + S-adenosyl-L-homocysteine + H(+). It participates in alkaloid biosynthesis; nicotine biosynthesis. Functionally, involved in the biosynthesis of pyridine alkaloid natural products, leading mainly to the production of anabasine, anatabine, nicotine and nornicotine, effective deterrents against herbivores with antiparasitic and pesticide properties (neurotoxins); nornicotine serves as the precursor in the synthesis of the carcinogen compound N'-nitrosonornicotine (NNN). Methyltransferase that mediates the conversion of putrescine to N-methylputrescine. This Nicotiana attenuata (Coyote tobacco) protein is Putrescine N-methyltransferase 1.